An 802-amino-acid chain; its full sequence is ATP-dependent zinc metalloprotease FTSH 7, chloroplastic (802 aa).

The transit peptide at 1–55 (MTTTFEFLQPRIHGFATCCSSNSLLYSKASRFFNDRCRVYRQNPNRFVSNSITLP) directs the protein to the chloroplast. Residues 87-117 (CQEDDQNESSSEEEESSQSTPAKSERKREKK) are disordered. A compositionally biased stretch (acidic residues) spans 88-102 (QEDDQNESSSEEEES). Helical transmembrane passes span 134–154 (IIQAQGIGVLLLQLSVVMFVM) and 268–288 (GGFFNSALIALFYIAVLAGLI). An ATP-binding site is contributed by 365-372 (GLPGTGKT). A Zn(2+)-binding site is contributed by histidine 590. The active site involves glutamate 591. Zn(2+)-binding residues include histidine 594 and aspartate 673.

In the N-terminal section; belongs to the AAA ATPase family. The protein in the C-terminal section; belongs to the peptidase M41 family. Zn(2+) is required as a cofactor.

It localises to the plastid. The protein resides in the chloroplast thylakoid membrane. Probable ATP-dependent zinc metallopeptidase. This is ATP-dependent zinc metalloprotease FTSH 7, chloroplastic (FTSH7) from Arabidopsis thaliana (Mouse-ear cress).